The primary structure comprises 832 residues: Alpha-glucan phosphorylase, H isozyme (832 aa).

Lys678 is subject to N6-(pyridoxal phosphate)lysine.

The protein belongs to the glycogen phosphorylase family. The cofactor is pyridoxal 5'-phosphate.

It is found in the cytoplasm. It carries out the reaction [(1-&gt;4)-alpha-D-glucosyl](n) + phosphate = [(1-&gt;4)-alpha-D-glucosyl](n-1) + alpha-D-glucose 1-phosphate. Functionally, phosphorylase is an important allosteric enzyme in carbohydrate metabolism. Enzymes from different sources differ in their regulatory mechanisms and in their natural substrates. However, all known phosphorylases share catalytic and structural properties. The polypeptide is Alpha-glucan phosphorylase, H isozyme (Triticum aestivum (Wheat)).